Consider the following 232-residue polypeptide: Protein fmp52-1, mitochondrial (232 aa).

A mitochondrion-targeting transit peptide spans 1–36 (MASVALIGCTGMVGSHILTSLLAHPSVARVDTISRR).

Belongs to the FMP52 family.

The protein localises to the mitochondrion outer membrane. This is Protein fmp52-1, mitochondrial (fmp521) from Aspergillus terreus (strain NIH 2624 / FGSC A1156).